The sequence spans 356 residues: MAPMGIRLSPLGVAVFFLLGLGVLYHLYSGFLAGRFSLFGLGSEPAAGEAEVASDGGTVDLREMLAVAVLAAERGGDEVRRVRESNVLHEKSKGKTREGADDKMTSGDVLSNRKMFYLLKTAFPNVQINTEEHVDASDKEVIVWNRKIPEDILKEIAAPKEVPAESVTVWIDPLDATQEYTEDLRKYVTTMVCVAVNGKPVLGVIHKPFSEYTAWAMVDGGSNVKARSSYNEKTPKIIVSRSHAGMVKQVALQTFGNQTSIIPAGGAGYKVLALLDVPDMTQEKADLYIHVTYIKKWDICAGNAILKALGGHMTTLNGEEISYTGSDGIEGGLLASIRMNHQALVRKLPDLEKSGH.

Met-1 carries the N-acetylmethionine modification. Over 1 to 12 the chain is Cytoplasmic; sequence MAPMGIRLSPLG. Residues 13–33 traverse the membrane as a helical segment; the sequence is VAVFFLLGLGVLYHLYSGFLA. At 34 to 356 the chain is on the lumenal side; that stretch reads GRFSLFGLGS…KLPDLEKSGH (323 aa). The disordered stretch occupies residues 84 to 104; sequence ESNVLHEKSKGKTREGADDKM. Asp-108 (proton acceptor) is an active-site residue. 4 residues coordinate Mg(2+): Glu-131, Asp-172, Leu-174, and Asp-175. The Proton acceptor role is filled by Thr-177. AMP-binding residues include Ser-240 and His-243. An N-linked (GlcNAc...) asparagine glycan is attached at Asn-257. AMP contacts are provided by Gly-266 and Lys-270. A Mg(2+)-binding site is contributed by Asp-298.

It belongs to the inositol monophosphatase superfamily. Mg(2+) is required as a cofactor. In terms of processing, N-glycosylated. Contains N-linked glycan resistant to endoglycosydase H.

It localises to the golgi apparatus. The protein resides in the trans-Golgi network membrane. The enzyme catalyses adenosine 3',5'-bisphosphate + H2O = AMP + phosphate. Its pathway is sulfur metabolism. With respect to regulation, strongly inhibited by lithium. Functionally, exhibits 3'-nucleotidase activity toward adenosine 3',5'-bisphosphate (PAP), namely hydrolyzes adenosine 3',5'-bisphosphate into adenosine 5'-monophosphate (AMP) and a phosphate. May play a role in the formation of skeletal elements derived through endochondral ossification, possibly by clearing adenosine 3',5'-bisphosphate produced by Golgi sulfotransferases during glycosaminoglycan sulfation. Has no activity toward 3'-phosphoadenosine 5'-phosphosulfate (PAPS) or inositol phosphate (IP) substrates including I(1)P, I(1,4)P2, I(1,3,4)P3, I(1,4,5)P3 and I(1,3,4,5)P4. This is Golgi-resident adenosine 3',5'-bisphosphate 3'-phosphatase from Mus musculus (Mouse).